Reading from the N-terminus, the 647-residue chain is DNA ligase (647 aa).

Residues 30 to 34, 79 to 80, and Glu-106 contribute to the NAD(+) site; these read DEEYD and SM. Lys-108 (N6-AMP-lysine intermediate) is an active-site residue. 3 residues coordinate NAD(+): Arg-129, Glu-163, and Lys-301. Positions 395, 398, 411, and 416 each coordinate Zn(2+). In terms of domain architecture, BRCT spans 569 to 647; that stretch reads SISNALSGKT…SEYERLKLEV (79 aa).

Belongs to the NAD-dependent DNA ligase family. LigA subfamily. Requires Mg(2+) as cofactor. Mn(2+) serves as cofactor.

The enzyme catalyses NAD(+) + (deoxyribonucleotide)n-3'-hydroxyl + 5'-phospho-(deoxyribonucleotide)m = (deoxyribonucleotide)n+m + AMP + beta-nicotinamide D-nucleotide.. In terms of biological role, DNA ligase that catalyzes the formation of phosphodiester linkages between 5'-phosphoryl and 3'-hydroxyl groups in double-stranded DNA using NAD as a coenzyme and as the energy source for the reaction. It is essential for DNA replication and repair of damaged DNA. This is DNA ligase from Campylobacter concisus (strain 13826).